We begin with the raw amino-acid sequence, 310 residues long: Beta-1,3-galactosyltransferase 5 (310 aa).

Topologically, residues 1-7 are cytoplasmic; that stretch reads MAFPKMR. Residues 8–28 traverse the membrane as a helical; Signal-anchor for type II membrane protein segment; the sequence is LMYICLLVLGALCLYFSMYSL. Residues 29 to 310 are Lumenal-facing; sequence NPFKEQSFVY…NSRGEDCPPV (282 aa). N-linked (GlcNAc...) asparagine glycans are attached at residues asparagine 130, asparagine 174, and asparagine 231.

It belongs to the glycosyltransferase 31 family. As to expression, expressed in stomach, jejunum, colon, pancreas, small intestine, testis and gastrointestinal and pancreatic cancer cell lines. Hardly detected in lung, liver, adrenal gland and peripheral blood leukocytes.

Its subcellular location is the golgi apparatus membrane. It catalyses the reaction a globoside Gb4Cer (d18:1(4E)) + UDP-alpha-D-galactose = a globoside GalGb4Cer (d18:1(4E)) + UDP + H(+). The protein operates within protein modification; protein glycosylation. In terms of biological role, catalyzes the transfer of Gal to GlcNAc-based acceptors with a preference for the core3 O-linked glycan GlcNAc(beta1,3)GalNAc structure. Can use glycolipid LC3Cer as an efficient acceptor. The chain is Beta-1,3-galactosyltransferase 5 from Homo sapiens (Human).